Reading from the N-terminus, the 327-residue chain is Ubiquinone biosynthesis protein COQ4, mitochondrial (327 aa).

4 residues coordinate Zn(2+): histidine 208, aspartate 209, histidine 212, and glutamate 224.

This sequence belongs to the COQ4 family. In terms of assembly, component of a multi-subunit COQ enzyme complex, composed of at least COQ3, COQ4, COQ5, COQ6, COQ7 and COQ9. Zn(2+) is required as a cofactor.

It localises to the mitochondrion inner membrane. The enzyme catalyses a 4-hydroxy-3-methoxy-5-(all-trans-polyprenyl)benzoate + H(+) = a 2-methoxy-6-(all-trans-polyprenyl)phenol + CO2. It participates in cofactor biosynthesis; ubiquinone biosynthesis. Functionally, lyase that catalyzes the C1-decarboxylation of 4-hydroxy-3-methoxy-5-(all-trans-polyprenyl)benzoic acid into 2-methoxy-6-(all-trans-polyprenyl)phenol during ubiquinone biosynthesis. The sequence is that of Ubiquinone biosynthesis protein COQ4, mitochondrial from Lachancea thermotolerans (strain ATCC 56472 / CBS 6340 / NRRL Y-8284) (Yeast).